A 395-amino-acid polypeptide reads, in one-letter code: Elongation factor Tu (395 aa).

Residues Lys-10–Val-205 form the tr-type G domain. Residues Gly-19–Thr-26 form a G1 region. Gly-19 to Thr-26 serves as a coordination point for GTP. Thr-26 contacts Mg(2+). Residues Gly-60–Asn-64 are G2. The interval Asp-81–Gly-84 is G3. GTP is bound by residues Asp-81–His-85 and Asn-136–Asp-139. The segment at Asn-136 to Asp-139 is G4. The tract at residues Ser-173–Phe-175 is G5.

It belongs to the TRAFAC class translation factor GTPase superfamily. Classic translation factor GTPase family. EF-Tu/EF-1A subfamily. As to quaternary structure, monomer.

It localises to the cytoplasm. The enzyme catalyses GTP + H2O = GDP + phosphate + H(+). Functionally, GTP hydrolase that promotes the GTP-dependent binding of aminoacyl-tRNA to the A-site of ribosomes during protein biosynthesis. The chain is Elongation factor Tu from Treponema denticola (strain ATCC 35405 / DSM 14222 / CIP 103919 / JCM 8153 / KCTC 15104).